The chain runs to 207 residues: Holliday junction branch migration complex subunit RuvA (207 aa).

Residues 1-65 (MYDYIRGVLT…ETEHVLYGFH (65 aa)) form a domain I region. Residues 66-144 (TRGERECFRM…DLLPLDAQIL (79 aa)) form a domain II region. A flexible linker region spans residues 145–155 (ASWEPAKPSCM). The tract at residues 155 to 207 (MEEGIQALAALGYPKSSAERMIAEAMSELPDHASVAEILPIALKKNLQGLNKI) is domain III.

It belongs to the RuvA family. Homotetramer. Forms an RuvA(8)-RuvB(12)-Holliday junction (HJ) complex. HJ DNA is sandwiched between 2 RuvA tetramers; dsDNA enters through RuvA and exits via RuvB. An RuvB hexamer assembles on each DNA strand where it exits the tetramer. Each RuvB hexamer is contacted by two RuvA subunits (via domain III) on 2 adjacent RuvB subunits; this complex drives branch migration. In the full resolvosome a probable DNA-RuvA(4)-RuvB(12)-RuvC(2) complex forms which resolves the HJ.

The protein localises to the cytoplasm. Its function is as follows. The RuvA-RuvB-RuvC complex processes Holliday junction (HJ) DNA during genetic recombination and DNA repair, while the RuvA-RuvB complex plays an important role in the rescue of blocked DNA replication forks via replication fork reversal (RFR). RuvA specifically binds to HJ cruciform DNA, conferring on it an open structure. The RuvB hexamer acts as an ATP-dependent pump, pulling dsDNA into and through the RuvAB complex. HJ branch migration allows RuvC to scan DNA until it finds its consensus sequence, where it cleaves and resolves the cruciform DNA. The protein is Holliday junction branch migration complex subunit RuvA of Chlamydia abortus (strain DSM 27085 / S26/3) (Chlamydophila abortus).